Consider the following 418-residue polypeptide: Equilibrative nucleotide transporter 3 (418 aa).

11 helical membrane-spanning segments follow: residues 20-40 (MVVCCILGIGSLVSWNSMLTI), 56-76 (VLTLVYQPFALGTILILAYHE), 86-106 (LIGYILFTISTFLLIVLDLAT), 112-132 (IGPYIGLCAVVASFGLADATV), 142-162 (LMCPELVQSFMGGLAVSGALT), 186-206 (MFLAISTCIELLCVFLYAYVF), 264-284 (YAVNLFLIYVCTLSIFPGFLY), 291-311 (GLGDWYALVLVAMYNCWDLVG), 326-346 (KLITIAVLSRYLLIPAFYFTA), 353-373 (WMIMLISVLGLTNGHLTVCIM), and 392-412 (LVIFLLGGIFAGVALDWLWLI).

This sequence belongs to the SLC29A/ENT transporter (TC 2.A.57) family. As to expression, expressed in root tips, vasculature of roots and leaves, and meristems of leaf primordia. Expressed in flowers and siliques.

It is found in the cell membrane. Nucleoside transporter that functions as a pyrimidine nucleoside carrier in all organs. Has high affinity for adenosine and uridine when expressed in a heterologous system (yeast). Mediates proton-dependent adenosine or uridine transport in Xenopus oocytes. This chain is Equilibrative nucleotide transporter 3, found in Arabidopsis thaliana (Mouse-ear cress).